Reading from the N-terminus, the 163-residue chain is Probable metallophosphoesterase MG207 (163 aa).

Positions 9, 11, 34, 53, 75, 107, and 109 each coordinate Mn(2+).

This sequence belongs to the metallophosphoesterase superfamily. YfcE family. It depends on Mn(2+) as a cofactor.

The polypeptide is Probable metallophosphoesterase MG207 (Mycoplasma genitalium (strain ATCC 33530 / DSM 19775 / NCTC 10195 / G37) (Mycoplasmoides genitalium)).